The sequence spans 654 residues: Tetracycline resistance protein TetQ (654 aa).

A tr-type G domain is found at 1 to 244 (MNIINLGILA…AISSFILPPE (244 aa)). Residues 10 to 17 (AHIDAGKT), 74 to 78 (DTPGH), and 128 to 131 (NKID) contribute to the GTP site.

This sequence belongs to the TRAFAC class translation factor GTPase superfamily. Classic translation factor GTPase family. TetM/TetO subfamily.

Its function is as follows. Abolishes the inhibitory effect of tetracyclin on protein synthesis by a non-covalent modification of the ribosomes. The chain is Tetracycline resistance protein TetQ (tetQ) from Prevotella intermedia.